We begin with the raw amino-acid sequence, 164 residues long: Low molecular weight protein-tyrosine-phosphatase (164 aa).

Catalysis depends on Cys9, which acts as the Nucleophile. The active site involves Arg15. Catalysis depends on Asp128, which acts as the Proton donor.

It belongs to the low molecular weight phosphotyrosine protein phosphatase family.

The enzyme catalyses O-phospho-L-tyrosyl-[protein] + H2O = L-tyrosyl-[protein] + phosphate. Its function is as follows. Acts on tyrosine phosphorylated proteins, low-MW aryl phosphates and natural and synthetic acyl phosphates. May be involved in the regulation of sulfur amino acid metabolism. The chain is Low molecular weight protein-tyrosine-phosphatase (ptpA) from Streptomyces coelicolor (strain ATCC BAA-471 / A3(2) / M145).